Consider the following 146-residue polypeptide: Hemoglobin subunit beta-2 (146 aa).

The region spanning 2 to 146 (KWTDKERAVI…VVSALGKQYC (145 aa)) is the Globin domain. Residues H63 and H92 each coordinate heme b.

Belongs to the globin family. In terms of assembly, heterotetramer of two alpha chains and two beta chains. As to expression, red blood cells.

Involved in oxygen transport from gills to the various peripheral tissues. This Lycodes reticulatus (Arctic eelpout) protein is Hemoglobin subunit beta-2 (hbb2).